The following is a 106-amino-acid chain: Ribonuclease P protein component 4 (106 aa).

Zn(2+) is bound by residues C62, C65, C88, and C91.

The protein belongs to the eukaryotic/archaeal RNase P protein component 4 family. In terms of assembly, consists of a catalytic RNA component and at least 4-5 protein subunits. Zn(2+) serves as cofactor.

Its subcellular location is the cytoplasm. It catalyses the reaction Endonucleolytic cleavage of RNA, removing 5'-extranucleotides from tRNA precursor.. Its function is as follows. Part of ribonuclease P, a protein complex that generates mature tRNA molecules by cleaving their 5'-ends. In Methanocorpusculum labreanum (strain ATCC 43576 / DSM 4855 / Z), this protein is Ribonuclease P protein component 4.